The primary structure comprises 641 residues: Phosphomethylpyrimidine synthase (641 aa).

Residues N221, M250, Y279, H315, 335 to 337 (SRG), 376 to 379 (DGLR), and E415 contribute to the substrate site. H419 provides a ligand contact to Zn(2+). Y442 serves as a coordination point for substrate. H483 provides a ligand contact to Zn(2+). [4Fe-4S] cluster is bound by residues C563, C566, and C571.

It belongs to the ThiC family. As to quaternary structure, homodimer. Requires [4Fe-4S] cluster as cofactor.

It catalyses the reaction 5-amino-1-(5-phospho-beta-D-ribosyl)imidazole + S-adenosyl-L-methionine = 4-amino-2-methyl-5-(phosphooxymethyl)pyrimidine + CO + 5'-deoxyadenosine + formate + L-methionine + 3 H(+). Its pathway is cofactor biosynthesis; thiamine diphosphate biosynthesis. Functionally, catalyzes the synthesis of the hydroxymethylpyrimidine phosphate (HMP-P) moiety of thiamine from aminoimidazole ribotide (AIR) in a radical S-adenosyl-L-methionine (SAM)-dependent reaction. This Rhodopseudomonas palustris (strain TIE-1) protein is Phosphomethylpyrimidine synthase.